The primary structure comprises 339 residues: Glucokinase (339 aa).

Residue 16 to 21 participates in ATP binding; that stretch reads GDIGGT.

Belongs to the bacterial glucokinase family.

The protein resides in the cytoplasm. It catalyses the reaction D-glucose + ATP = D-glucose 6-phosphate + ADP + H(+). This chain is Glucokinase, found in Pseudomonas paraeruginosa (strain DSM 24068 / PA7) (Pseudomonas aeruginosa (strain PA7)).